A 100-amino-acid chain; its full sequence is Replication restart protein PriB (100 aa).

An SSB domain is found at 4 to 99 (TNLVSLAALI…LRIQNIKEYK (96 aa)).

This sequence belongs to the PriB family. Homodimer. Component of the replication restart primosome. Primosome assembly occurs via a 'hand-off' mechanism. PriA binds to replication forks, subsequently PriB then DnaT bind; DnaT then displaces ssDNA to generate the helicase loading substrate. Interacts with PriA with high affinity, independent of DNA presence.

With respect to regulation, priA:PriB complex-catalyzed duplex DNA winding is inhibited by CGS 15943 (CHEBI:131351); PriA is the drug target. Functionally, stimulates the DNA unwinding activity of PriA helicase, which does not seem to require single-stranded (ss)DNA-binding by PriB. Activates DNA-dependent ATP hydrolysis catalyzed by PriA. Weakly binds ssDNA. Weakly binds double-stranded (ds)DNA, a partial duplex DNA with a 3' ssDNA overhang, and a forked DNA structure with fully duplex leading and lagging strand arms in vitro. Involved in the restart of stalled replication forks, which reloads the replicative helicase on sites other than the origin of replication; the PriA-PriB pathway is the major replication restart pathway. During primosome assembly it facilitates complex formation between PriA and DnaT on DNA; stabilizes PriA on DNA. Stimulates the DNA unwinding activity of PriA helicase. In Neisseria gonorrhoeae (strain ATCC 700825 / FA 1090), this protein is Replication restart protein PriB.